The following is a 333-amino-acid chain: Phosphoribosylformylglycinamidine cyclo-ligase (333 aa).

Belongs to the AIR synthase family.

It localises to the cytoplasm. It catalyses the reaction 2-formamido-N(1)-(5-O-phospho-beta-D-ribosyl)acetamidine + ATP = 5-amino-1-(5-phospho-beta-D-ribosyl)imidazole + ADP + phosphate + H(+). It participates in purine metabolism; IMP biosynthesis via de novo pathway; 5-amino-1-(5-phospho-D-ribosyl)imidazole from N(2)-formyl-N(1)-(5-phospho-D-ribosyl)glycinamide: step 2/2. The sequence is that of Phosphoribosylformylglycinamidine cyclo-ligase from Clostridium perfringens (strain 13 / Type A).